The chain runs to 1394 residues: DNA-directed RNA polymerase subunit beta' (1394 aa).

Zn(2+) contacts are provided by C70, C72, C85, and C88. Mg(2+)-binding residues include D470, D472, and D474. Positions 815, 889, 896, and 899 each coordinate Zn(2+).

This sequence belongs to the RNA polymerase beta' chain family. The RNAP catalytic core consists of 2 alpha, 1 beta, 1 beta' and 1 omega subunit. When a sigma factor is associated with the core the holoenzyme is formed, which can initiate transcription. It depends on Mg(2+) as a cofactor. Zn(2+) serves as cofactor.

It catalyses the reaction RNA(n) + a ribonucleoside 5'-triphosphate = RNA(n+1) + diphosphate. In terms of biological role, DNA-dependent RNA polymerase catalyzes the transcription of DNA into RNA using the four ribonucleoside triphosphates as substrates. This is DNA-directed RNA polymerase subunit beta' from Anaeromyxobacter sp. (strain K).